Consider the following 244-residue polypeptide: 1-(5-phosphoribosyl)-5-[(5-phosphoribosylamino)methylideneamino] imidazole-4-carboxamide isomerase (244 aa).

Aspartate 8 (proton acceptor) is an active-site residue. Aspartate 129 serves as the catalytic Proton donor.

It belongs to the HisA/HisF family.

Its subcellular location is the cytoplasm. The enzyme catalyses 1-(5-phospho-beta-D-ribosyl)-5-[(5-phospho-beta-D-ribosylamino)methylideneamino]imidazole-4-carboxamide = 5-[(5-phospho-1-deoxy-D-ribulos-1-ylimino)methylamino]-1-(5-phospho-beta-D-ribosyl)imidazole-4-carboxamide. Its pathway is amino-acid biosynthesis; L-histidine biosynthesis; L-histidine from 5-phospho-alpha-D-ribose 1-diphosphate: step 4/9. The chain is 1-(5-phosphoribosyl)-5-[(5-phosphoribosylamino)methylideneamino] imidazole-4-carboxamide isomerase from Bradyrhizobium sp. (strain ORS 278).